Here is a 378-residue protein sequence, read N- to C-terminus: L-lactate dehydrogenase (378 aa).

Residues 1–378 (MIISASTDYR…ELSRDSLVKR (378 aa)) enclose the FMN hydroxy acid dehydrogenase domain. Tyr24 is a substrate binding site. Residues Ser106 and Gln127 each contribute to the FMN site. Tyr129 is a binding site for substrate. Position 155 (Thr155) interacts with FMN. Arg164 is a substrate binding site. Lys251 contacts FMN. His275 serves as the catalytic Proton acceptor. Arg278 serves as a coordination point for substrate. 306 to 330 (DSGIRTGLDVVRMLALGADCTMLGR) lines the FMN pocket.

The protein belongs to the FMN-dependent alpha-hydroxy acid dehydrogenase family. The cofactor is FMN.

It localises to the cell inner membrane. The enzyme catalyses (S)-lactate + A = pyruvate + AH2. In terms of biological role, catalyzes the conversion of L-lactate to pyruvate. Is coupled to the respiratory chain. The polypeptide is L-lactate dehydrogenase (Vibrio cholerae serotype O1 (strain ATCC 39315 / El Tor Inaba N16961)).